Reading from the N-terminus, the 537-residue chain is O-phosphoserine--tRNA(Cys) ligase (537 aa).

Substrate-binding positions include 186–188 (HMT), 231–233 (SAS), 273–274 (YY), and Asn-317.

The protein belongs to the class-II aminoacyl-tRNA synthetase family. O-phosphoseryl-tRNA(Cys) synthetase subfamily. As to quaternary structure, homotetramer. Interacts with SepCysS.

It catalyses the reaction tRNA(Cys) + O-phospho-L-serine + ATP = O-phospho-L-seryl-tRNA(Cys) + AMP + diphosphate. Its function is as follows. Catalyzes the attachment of O-phosphoserine (Sep) to tRNA(Cys). In Methanococcus maripaludis (strain C6 / ATCC BAA-1332), this protein is O-phosphoserine--tRNA(Cys) ligase.